A 184-amino-acid polypeptide reads, in one-letter code: Photosystem I assembly protein Ycf4 (184 aa).

Helical transmembrane passes span 20–42 and 57–79; these read VNLCWACILVCGATGFLLVGFSS and IAFIPQGLVMCFYGIAGLFLGLY.

This sequence belongs to the Ycf4 family.

It localises to the plastid. The protein resides in the chloroplast thylakoid membrane. Functionally, seems to be required for the assembly of the photosystem I complex. This is Photosystem I assembly protein Ycf4 from Adiantum capillus-veneris (Maidenhair fern).